A 541-amino-acid polypeptide reads, in one-letter code: Phosphoenolpyruvate carboxykinase (ATP) (541 aa).

Substrate-binding residues include Arg-64, Tyr-206, and Lys-212. Residues Lys-212, His-231, and 247–255 (GLSGTGKTT) each bind ATP. The Mn(2+) site is built by Lys-212 and His-231. Position 268 (Asp-268) interacts with Mn(2+). Residues Glu-296, Arg-332, and Thr-454 each coordinate ATP. Arg-332 serves as a coordination point for substrate.

The protein belongs to the phosphoenolpyruvate carboxykinase (ATP) family. In terms of assembly, monomer. Mn(2+) serves as cofactor.

It localises to the cytoplasm. The enzyme catalyses oxaloacetate + ATP = phosphoenolpyruvate + ADP + CO2. It participates in carbohydrate biosynthesis; gluconeogenesis. In terms of biological role, involved in the gluconeogenesis. Catalyzes the conversion of oxaloacetate (OAA) to phosphoenolpyruvate (PEP) through direct phosphoryl transfer between the nucleoside triphosphate and OAA. The sequence is that of Phosphoenolpyruvate carboxykinase (ATP) from Wigglesworthia glossinidia brevipalpis.